Consider the following 221-residue polypeptide: CDP-diacylglycerol--glycerol-3-phosphate 3-phosphatidyltransferase (221 aa).

5 consecutive transmembrane segments (helical) span residues 8 to 28 (ILTVLRLLAAPGVAVMFLYFH), 34 to 54 (WFALTLFILAAVTDFFDGYLA), 75 to 95 (MVVIALVIITGYSGMNPWLIL), 133 to 153 (AQMVAIAILFLGTGLEHLEGI), and 187 to 207 (ATWLGLALIWIAAALTFITGW).

The protein belongs to the CDP-alcohol phosphatidyltransferase class-I family.

Its subcellular location is the cell membrane. It carries out the reaction a CDP-1,2-diacyl-sn-glycerol + sn-glycerol 3-phosphate = a 1,2-diacyl-sn-glycero-3-phospho-(1'-sn-glycero-3'-phosphate) + CMP + H(+). Its pathway is phospholipid metabolism; phosphatidylglycerol biosynthesis; phosphatidylglycerol from CDP-diacylglycerol: step 1/2. Functionally, this protein catalyzes the committed step to the synthesis of the acidic phospholipids. This chain is CDP-diacylglycerol--glycerol-3-phosphate 3-phosphatidyltransferase (pgsA), found in Cereibacter sphaeroides (strain ATCC 17023 / DSM 158 / JCM 6121 / CCUG 31486 / LMG 2827 / NBRC 12203 / NCIMB 8253 / ATH 2.4.1.) (Rhodobacter sphaeroides).